A 323-amino-acid polypeptide reads, in one-letter code: Tetraacyldisaccharide 4'-kinase (323 aa).

ATP is bound at residue T56–T63.

Belongs to the LpxK family.

It catalyses the reaction a lipid A disaccharide + ATP = a lipid IVA + ADP + H(+). It functions in the pathway glycolipid biosynthesis; lipid IV(A) biosynthesis; lipid IV(A) from (3R)-3-hydroxytetradecanoyl-[acyl-carrier-protein] and UDP-N-acetyl-alpha-D-glucosamine: step 6/6. In terms of biological role, transfers the gamma-phosphate of ATP to the 4'-position of a tetraacyldisaccharide 1-phosphate intermediate (termed DS-1-P) to form tetraacyldisaccharide 1,4'-bis-phosphate (lipid IVA). The sequence is that of Tetraacyldisaccharide 4'-kinase from Legionella pneumophila (strain Lens).